Consider the following 448-residue polypeptide: U1 small nuclear ribonucleoprotein 70 kDa (448 aa).

Residues 91 to 201 (TEIKNATEDP…GGGLGGTRRG (111 aa)) form a required for interaction with U1 RNA region. An RRM domain is found at 102–180 (RTLFIARINY…KRVLVDVERA (79 aa)). The interval 188–448 (PRRLGGGLGG…SSGDPSWWRQ (261 aa)) is disordered. Gly residues predominate over residues 191-200 (LGGGLGGTRR). 2 stretches are compositionally biased toward basic and acidic residues: residues 206–234 (NIKHSGREDNERERERYRLEREREDREGP) and 262–272 (ERRDRERDRGR). A compositionally biased stretch (basic residues) spans 281–293 (SRSRSRERRKRRA). Basic and acidic residues-rich tracts occupy residues 294-320 (GSRERYDEFDRRDRRDRERERDRDRER) and 346-376 (RDRERGTGSGGDVKERKPDFRDMDVIKIKEE). The mediates binding to Psi stretch occupies residues 405 to 425 (RPPPAHHNMFSVPPPPILGRG). A compositionally biased stretch (polar residues) spans 426–448 (NASTNPNPDNGQQSSGDPSWWRQ).

Component of the U1 snRNP. Interacts with Psi; essential for alternative splicing of P-element transposase. Interacts with the SMN complex.

Its subcellular location is the nucleus speckle. The protein localises to the nucleus. It localises to the nucleoplasm. Functionally, mediates the splicing of pre-mRNA by binding to the stem loop I region of U1-snRNA. Required during oogenesis for nurse cell chromatin dispersal. This chain is U1 small nuclear ribonucleoprotein 70 kDa (snRNP-U1-70K), found in Drosophila melanogaster (Fruit fly).